A 310-amino-acid polypeptide reads, in one-letter code: Glutaminase (310 aa).

Substrate is bound by residues Ser66, Asn117, Glu161, Asn168, Tyr192, Tyr244, and Val262.

The protein belongs to the glutaminase family. As to quaternary structure, homotetramer.

It catalyses the reaction L-glutamine + H2O = L-glutamate + NH4(+). The sequence is that of Glutaminase from Shigella boydii serotype 4 (strain Sb227).